The following is a 140-amino-acid chain: Lymphocyte antigen 6L (140 aa).

A signal peptide spans 1–20 (MAPLLLVLWASLVSMELTGG). Residues 31-124 (LSCFECFKVL…GSWEGFWSLP (94 aa)) form the UPAR/Ly6 domain. 2 disulfide bridges follow: Cys-33–Cys-50 and Cys-105–Cys-110. Ser-116 is lipidated: GPI-anchor amidated serine. Positions 117-140 (WEGFWSLPGRLLLPMGLGLFCTLL) are cleaved as a propeptide — removed in mature form.

The protein localises to the cell membrane. This is Lymphocyte antigen 6L from Mus musculus (Mouse).